The sequence spans 1400 residues: DNA-directed RNA polymerase subunit beta' (1400 aa).

Residues cysteine 70, cysteine 72, cysteine 85, and cysteine 88 each coordinate Zn(2+). Mg(2+) is bound by residues aspartate 460, aspartate 462, and aspartate 464. Cysteine 814, cysteine 888, cysteine 895, and cysteine 898 together coordinate Zn(2+). Residues 1367–1400 are disordered; sequence DRQAKRAEAQEGPSAEQATDNLAALLNAGFSSDE.

It belongs to the RNA polymerase beta' chain family. The RNAP catalytic core consists of 2 alpha, 1 beta, 1 beta' and 1 omega subunit. When a sigma factor is associated with the core the holoenzyme is formed, which can initiate transcription. Mg(2+) serves as cofactor. The cofactor is Zn(2+).

It catalyses the reaction RNA(n) + a ribonucleoside 5'-triphosphate = RNA(n+1) + diphosphate. Functionally, DNA-dependent RNA polymerase catalyzes the transcription of DNA into RNA using the four ribonucleoside triphosphates as substrates. This is DNA-directed RNA polymerase subunit beta' from Vibrio campbellii (strain ATCC BAA-1116).